A 93-amino-acid polypeptide reads, in one-letter code: Small ribosomal subunit protein uS19 (93 aa).

Belongs to the universal ribosomal protein uS19 family.

In terms of biological role, protein S19 forms a complex with S13 that binds strongly to the 16S ribosomal RNA. This Syntrophus aciditrophicus (strain SB) protein is Small ribosomal subunit protein uS19.